The sequence spans 1461 residues: Autotransporter adhesin SadA (1461 aa).

A signal peptide spans 1–54 (MNRIFKVLWNAATGTFVVTSETAKSRGKKNGRRKLAVSALIGLSSIMVSADALA). A surface exposed passenger domain region spans residues 55–1372 (NAGNDTGDGV…EEANTYTDQK (1318 aa)). A translocator domain region spans residues 1373–1461 (MGEMNSKIKG…SAAIGAGFQW (89 aa)). 4 consecutive transmembrane segments (beta stranded) span residues 1407–1417 (GANMTSIAGGT), 1421–1431 (ESAVAIGVSMV), 1440–1446 (KLQGTSN), and 1450–1461 (DYSAAIGAGFQW).

This sequence belongs to the autotransporter-2 (AT-2) (TC 1.B.40) family. Homotrimer.

It is found in the cell surface. Its subcellular location is the cell outer membrane. In terms of biological role, involved in cell aggregation, biofilm formation, and adhesion to human intestinal epithelial cells. This Salmonella typhimurium (strain LT2 / SGSC1412 / ATCC 700720) protein is Autotransporter adhesin SadA.